Reading from the N-terminus, the 844-residue chain is MAGNDREPIGRKGKPTRPVKQKVSRRRYEDDDDYDDYDDYEDEEPMPRKGKGKGKGRKPRGKRGWLWLLLKLAIVFAVLIAIYGVYLDQKIRSRIDGKVWQLPAAVYGRMVNLEPDMTISKNEMVKLLEATQYRQVSKMTRPGEFTVQANSIEMIRRPFDFPDSKEGQVRARLTFDGDHLATIVNMENNRQFGFFRLDPRLITMISSPNGEQRLFVPRSGFPDLLVDTLLATEDRHFYEHDGISLYSIGRAVLANLTAGRTVQGASTLTQQLVKNLFLSSERSYWRKANEAYMALIMDARYSKDRILELYMNEVYLGQSGDNEIRGFPLASLYYFGRPVEELSLDQQALLVGMVKGASIYNPWRNPKLALERRNLVLRLLQQQQIIDQELYDMLSARPLGVQPRGGVISPQPAFMQLVRQELQAKLGDKVKDLSGVKIFTTFDSVAQDAAEKAAVEGIPALKKQRKLSDLETAIVVVDRFSGEVRAMVGGSEPQFAGYNRAMQARRSIGSLAKPATYLTALSQPKIYRLNTWIADAPIALRQPNGQVWSPQNDDRRYSESGRVMLVDALTRSMNVPTVNLGMALGLPAVTETWIKLGVPKDQLHPVPAMLLGALNLTPIEVAQAFQTIASGGNRAPLSALRSVIAEDGKVLYQSFPQAERAVPAQAAYLTLWTMQQVVQRGTGRQLGAKYPNLHLAGKTGTTNNNVDTWFAGIDGSTVTITWVGRDNNQPTKLYGASGAMSIYQRYLANQTPTPLNLVPPEDIADMGVDYDGNFVCSGGMRILPVWTSDPQSLCQQSEMQQQPSGNPFDQSSQPQQQPQQQPAQQEQKDSDGVAGWIKDMFGSN.

Positions Met-1 to Gly-10 are enriched in basic and acidic residues. The segment at Met-1–Arg-60 is disordered. Topologically, residues Met-1–Arg-63 are cytoplasmic. A compositionally biased stretch (basic residues) spans Arg-11 to Arg-25. Over residues Asp-30–Glu-44 the composition is skewed to acidic residues. The span at Arg-48–Arg-60 shows a compositional bias: basic residues. Residues Gly-64–Leu-87 traverse the membrane as a helical; Signal-anchor for type II membrane protein segment. Residues Asp-88–Arg-250 form a membrane association region. Over Asp-88–Asn-844 the chain is Periplasmic. Positions Arg-109–Arg-200 are uvrB domain 2 homolog. The interval Phe-195 to Lys-367 is transglycosylase. Glu-233 (proton donor; for transglycosylase activity) is an active-site residue. The interval Ser-444–Ala-736 is transpeptidase. The active-site Acyl-ester intermediate; for transpeptidase activity is the Ser-510. Residues Leu-793–Gln-825 show a composition bias toward low complexity. Residues Leu-793–Gly-835 form a disordered region.

The protein in the N-terminal section; belongs to the glycosyltransferase 51 family. This sequence in the C-terminal section; belongs to the transpeptidase family. As to quaternary structure, forms a trimeric complex with MipA and MltA. Has also been shown to exist as monomer or homodimer; homodimer of Alpha and Gamma isozymes can be found. Interacts with UvrA, FtsL and FtsN.

The protein resides in the cell inner membrane. The catalysed reaction is [GlcNAc-(1-&gt;4)-Mur2Ac(oyl-L-Ala-gamma-D-Glu-L-Lys-D-Ala-D-Ala)](n)-di-trans,octa-cis-undecaprenyl diphosphate + beta-D-GlcNAc-(1-&gt;4)-Mur2Ac(oyl-L-Ala-gamma-D-Glu-L-Lys-D-Ala-D-Ala)-di-trans,octa-cis-undecaprenyl diphosphate = [GlcNAc-(1-&gt;4)-Mur2Ac(oyl-L-Ala-gamma-D-Glu-L-Lys-D-Ala-D-Ala)](n+1)-di-trans,octa-cis-undecaprenyl diphosphate + di-trans,octa-cis-undecaprenyl diphosphate + H(+). It catalyses the reaction Preferential cleavage: (Ac)2-L-Lys-D-Ala-|-D-Ala. Also transpeptidation of peptidyl-alanyl moieties that are N-acyl substituents of D-alanine.. It participates in cell wall biogenesis; peptidoglycan biosynthesis. Its function is as follows. Cell wall formation. Synthesis of cross-linked peptidoglycan from the lipid intermediates. The enzyme has a penicillin-insensitive transglycosylase N-terminal domain (formation of linear glycan strands) and a penicillin-sensitive transpeptidase C-terminal domain (cross-linking of the peptide subunits). In Escherichia coli (strain K12), this protein is Penicillin-binding protein 1B (mrcB).